The primary structure comprises 359 residues: Uroporphyrinogen decarboxylase (359 aa).

Coproporphyrinogen III is bound by residues Arg28, Ala30, Arg32, Asp79, Tyr157, Ser212, and His335.

It belongs to the uroporphyrinogen decarboxylase family. As to quaternary structure, monomer.

It is found in the nucleus. Its subcellular location is the cytoplasm. It carries out the reaction uroporphyrinogen III + 4 H(+) = coproporphyrinogen III + 4 CO2. The catalysed reaction is uroporphyrinogen I + 4 H(+) = coproporphyrinogen I + 4 CO2. Its pathway is porphyrin-containing compound metabolism; protoporphyrin-IX biosynthesis; coproporphyrinogen-III from 5-aminolevulinate: step 4/4. Catalyzes the sequential decarboxylation of four acetate groups of uroporphyrinogen-III (octacarboxyporphyrin) to yield coproporphyrinogen-III (tetracarboxyporphyrin) with the formation of intermediate hepta-, hexa- and penta-carboxylate porphyrinogens in the heme biosynthesis pathway. Acts on a number of porphyrinogens, but only coproporphyrinogen III can ultimately be converted to heme. The polypeptide is Uroporphyrinogen decarboxylase (hem12) (Schizosaccharomyces pombe (strain 972 / ATCC 24843) (Fission yeast)).